Here is a 776-residue protein sequence, read N- to C-terminus: Transcription activator of gluconeogenesis HCAG_03671 (776 aa).

The tract at residues 1-70 (MTASTQNGSP…NAKDPLRPRR (70 aa)) is disordered. Composition is skewed to polar residues over residues 21-41 (NQESKNMTANPADASESQSPA) and 50-60 (ENGQKHTSTAA). The segment at residues 77–105 (CFACQRAHLTCGDERPCQRCIKRGLQDAC) is a DNA-binding region (zn(2)-C6 fungal-type). Disordered regions lie at residues 140–159 (RTNASQQQNGPNSNSNKDSR), 179–248 (TQAK…PFGA), 286–351 (GAGD…NIYN), 556–593 (NLNVNTGGSSPRGSGTFTPRNGNGVDPHSGMSASGGGG), and 651–726 (REAQ…SPKQ). Low complexity predominate over residues 142-155 (NASQQQNGPNSNSN). The segment covering 195 to 217 (MQDTSINPSAFQAPSPTSTPNFD) has biased composition (polar residues). The segment covering 218–229 (LSSNPPNRNLSS) has biased composition (low complexity). Composition is skewed to polar residues over residues 230–244 (AMTQTPSSASNQTQD), 292–322 (PSDSATQRGSIGRSSGTFTAQNFGDSTNTQP), 334–351 (WNPSGQSQTNPRNNNIYN), and 557–576 (LNVNTGGSSPRGSGTFTPRN). Residues 657 to 669 (GPDGKGGGGGGGD) are compositionally biased toward gly residues. The span at 670–714 (VATTAATTSTSTSNGANSSGHANANRNNTNPNNSSPPSSSSAAAA) shows a compositional bias: low complexity.

This sequence belongs to the ERT1/acuK family.

It localises to the nucleus. Transcription factor which regulates nonfermentable carbon utilization. Activator of gluconeogenetic genes. The protein is Transcription activator of gluconeogenesis HCAG_03671 of Ajellomyces capsulatus (strain NAm1 / WU24) (Darling's disease fungus).